Reading from the N-terminus, the 144-residue chain is ATP synthase epsilon chain (144 aa).

The protein belongs to the ATPase epsilon chain family. As to quaternary structure, F-type ATPases have 2 components, CF(1) - the catalytic core - and CF(0) - the membrane proton channel. CF(1) has five subunits: alpha(3), beta(3), gamma(1), delta(1), epsilon(1). CF(0) has three main subunits: a, b and c.

The protein resides in the cell inner membrane. Produces ATP from ADP in the presence of a proton gradient across the membrane. In Ectopseudomonas mendocina (strain ymp) (Pseudomonas mendocina), this protein is ATP synthase epsilon chain.